The primary structure comprises 403 residues: Protein WVD2-like 6 (403 aa).

Disordered regions lie at residues 1–179 (MDSE…ALPN) and 254–403 (LKKI…AVEP). Residues 25 to 56 (GDSSNGNGGTSENLECCSTQHPMEASEGTQNE) are compositionally biased toward polar residues. Residues 103 to 118 (SVAPNVKPVKSPKSKS) are compositionally biased toward low complexity. Serine 113 carries the phosphoserine modification. Composition is skewed to basic and acidic residues over residues 120 to 132 (NGREAHVTKHGNH), 139 to 153 (GTRDKPKLRETRKQV), and 162 to 171 (QYPKEDDGKP). A compositionally biased stretch (basic residues) spans 263-273 (KSPKLGRKKTN). Positions 336–348 (KVAPAKAVTASTK) are enriched in low complexity. The span at 385–394 (VNEDRNESHM) shows a compositional bias: basic and acidic residues.

The protein belongs to the TPX2 family. Expressed in seedlings.

It localises to the cytoplasm. Its subcellular location is the cytoskeleton. In terms of biological role, microtubule-associated protein (MAP) that regulates the orientation of interphase cortical microtubules. The chain is Protein WVD2-like 6 from Arabidopsis thaliana (Mouse-ear cress).